The primary structure comprises 793 residues: DnaJ homolog subfamily C member 10 (793 aa).

Positions 1–32 are cleaved as a signal peptide; sequence MGVWLNKDDFIRDLKRISLCLLILYVVVVVGT. One can recognise a J domain in the interval 35 to 100; sequence NFYSLLGVSK…DLRKKYDKYG (66 aa). The region spanning 130–232 is the Thioredoxin 1 domain; the sequence is EIITLERREF…ESLVAFAMQH (103 aa). The cysteines at positions 158 and 161 are disulfide-linked. Trxb regions lie at residues 235–350 and 348–463; these read STVT…LPDF and PDFE…PQNF. 3 consecutive Thioredoxin domains span residues 454-553, 557-665, and 671-776; these read HVTT…IEDL, SVVS…SWGL, and ASID…ALIY. Cysteine 480 and cysteine 483 form a disulfide bridge. Asparagine 530 carries an N-linked (GlcNAc...) asparagine glycan. 2 cysteine pairs are disulfide-bonded: cysteine 588-cysteine 591 and cysteine 700-cysteine 703. The short motif at 790–793 is the Prevents secretion from ER element; that stretch reads KDEL.

As to quaternary structure, interacts with HSPA5 (via its J domain). Interacts with EDEM1. Ubiquitous. Particularly abundant in secretory tissues. Ubiquitous in fetal tissues and tumor tissues. Higher expression in fetal tissues than in adult tissues. Expressed in testis, pancreas, fetal thymus and fetal kidney. High expression in heart, liver, kidney, and testis. Low expression in spleen and skeletal muscle.

The protein localises to the endoplasmic reticulum lumen. Its function is as follows. Endoplasmic reticulum disulfide reductase involved both in the correct folding of proteins and degradation of misfolded proteins. Required for efficient folding of proteins in the endoplasmic reticulum by catalyzing the removal of non-native disulfide bonds formed during the folding of proteins, such as LDLR. Also involved in endoplasmic reticulum-associated degradation (ERAD) by reducing incorrect disulfide bonds in misfolded glycoproteins recognized by EDEM1. Interaction with HSPA5 is required its activity, not for the disulfide reductase activity, but to facilitate the release of DNAJC10 from its substrate. Promotes apoptotic signaling pathway in response to endoplasmic reticulum stress. The polypeptide is DnaJ homolog subfamily C member 10 (Dnajc10) (Mus musculus (Mouse)).